Consider the following 191-residue polypeptide: Cathelicidin-related antimicrobial peptide Na_CRAMP (191 aa).

The N-terminal stretch at 1-22 (MEGFFWKTLLVVGALTISGTSS) is a signal peptide. Residues 23–161 (FPHKPLTYEE…DQPKRVKRFK (139 aa)) constitute a propeptide that is removed on maturation. Disulfide bonds link Cys-81–Cys-92 and Cys-103–Cys-120. The interval 126-154 (EEEQKQEEGNEEEKEVEKEEKEEDQKDQP) is disordered. Over residues 140–154 (EVEKEEKEEDQKDQP) the composition is skewed to basic and acidic residues.

This sequence belongs to the cathelicidin family. In terms of tissue distribution, expressed by the venom gland.

It is found in the secreted. The protein resides in the target cell membrane. Its function is as follows. Potent antimicrobial peptide against most of Gram-negative bacteria, some Gram-positive bacteria (Bacillus) and some fungi. Adopts an amphipathic alpha helical conformation, that may allow to partition into the target membrane. No hemolytic and cytotoxic activities have been observed on mammalian cells. This chain is Cathelicidin-related antimicrobial peptide Na_CRAMP, found in Naja atra (Chinese cobra).